The primary structure comprises 443 residues: Chromosomal replication initiator protein DnaA (443 aa).

The segment at 1-67 is domain I, interacts with DnaA modulators; it reads MDAWSRSLER…RELLAHFAGF (67 aa). The segment at 67 to 105 is domain II; it reads FSDVFLEIGSRPRPVEAQNAPVSTPSAHVSSEPQVPFAG. Positions 106–323 are domain III, AAA+ region; it reads NLDNHYTFAN…GALNTLTARA (218 aa). ATP-binding residues include glycine 151, glycine 153, lysine 154, and threonine 155. The segment at 324-443 is domain IV, binds dsDNA; the sequence is NFTGRAITTE…WDKLIRKLSE (120 aa).

It belongs to the DnaA family. In terms of assembly, oligomerizes as a right-handed, spiral filament on DNA at oriC.

It localises to the cytoplasm. Functionally, plays an essential role in the initiation and regulation of chromosomal replication. ATP-DnaA binds to the origin of replication (oriC) to initiate formation of the DNA replication initiation complex once per cell cycle. Binds the DnaA box (a 9 base pair repeat at the origin) and separates the double-stranded (ds)DNA. Forms a right-handed helical filament on oriC DNA; dsDNA binds to the exterior of the filament while single-stranded (ss)DNA is stabiized in the filament's interior. The ATP-DnaA-oriC complex binds and stabilizes one strand of the AT-rich DNA unwinding element (DUE), permitting loading of DNA polymerase. After initiation quickly degrades to an ADP-DnaA complex that is not apt for DNA replication. Binds acidic phospholipids. The protein is Chromosomal replication initiator protein DnaA of Stenotrophomonas maltophilia (strain K279a).